The following is a 195-amino-acid chain: Imidazoleglycerol-phosphate dehydratase (195 aa).

This sequence belongs to the imidazoleglycerol-phosphate dehydratase family.

The protein resides in the cytoplasm. It catalyses the reaction D-erythro-1-(imidazol-4-yl)glycerol 3-phosphate = 3-(imidazol-4-yl)-2-oxopropyl phosphate + H2O. It participates in amino-acid biosynthesis; L-histidine biosynthesis; L-histidine from 5-phospho-alpha-D-ribose 1-diphosphate: step 6/9. The protein is Imidazoleglycerol-phosphate dehydratase of Bordetella bronchiseptica (strain ATCC BAA-588 / NCTC 13252 / RB50) (Alcaligenes bronchisepticus).